Reading from the N-terminus, the 706-residue chain is Elongation factor G (706 aa).

Residues 15–291 (LKTRNIGISA…GVLDYLASPV (277 aa)) form the tr-type G domain. Residues 24–31 (AHIDSGKT), 91–95 (DTPGH), and 145–148 (NKLD) each bind GTP.

This sequence belongs to the TRAFAC class translation factor GTPase superfamily. Classic translation factor GTPase family. EF-G/EF-2 subfamily.

It localises to the cytoplasm. Its function is as follows. Catalyzes the GTP-dependent ribosomal translocation step during translation elongation. During this step, the ribosome changes from the pre-translocational (PRE) to the post-translocational (POST) state as the newly formed A-site-bound peptidyl-tRNA and P-site-bound deacylated tRNA move to the P and E sites, respectively. Catalyzes the coordinated movement of the two tRNA molecules, the mRNA and conformational changes in the ribosome. The protein is Elongation factor G of Leptospira borgpetersenii serovar Hardjo-bovis (strain JB197).